Here is a 241-residue protein sequence, read N- to C-terminus: Adenosine 5'-phosphosulfate reductase (241 aa).

Residues C122, C123, C205, and C208 each contribute to the [4Fe-4S] cluster site. Residue C231 is the Nucleophile; cysteine thiosulfonate intermediate of the active site.

The protein belongs to the PAPS reductase family. CysH subfamily. The cofactor is [4Fe-4S] cluster.

It is found in the cytoplasm. The enzyme catalyses [thioredoxin]-disulfide + sulfite + AMP + 2 H(+) = adenosine 5'-phosphosulfate + [thioredoxin]-dithiol. The protein operates within sulfur metabolism; hydrogen sulfide biosynthesis; sulfite from sulfate. In terms of biological role, catalyzes the formation of sulfite from adenosine 5'-phosphosulfate (APS) using thioredoxin as an electron donor. The sequence is that of Adenosine 5'-phosphosulfate reductase from Shouchella clausii (strain KSM-K16) (Alkalihalobacillus clausii).